Here is a 319-residue protein sequence, read N- to C-terminus: Ribosomal RNA small subunit methyltransferase H (319 aa).

Residues 38–40, D58, F82, D104, and Q111 contribute to the S-adenosyl-L-methionine site; that span reads GGH.

Belongs to the methyltransferase superfamily. RsmH family.

The protein resides in the cytoplasm. The enzyme catalyses cytidine(1402) in 16S rRNA + S-adenosyl-L-methionine = N(4)-methylcytidine(1402) in 16S rRNA + S-adenosyl-L-homocysteine + H(+). In terms of biological role, specifically methylates the N4 position of cytidine in position 1402 (C1402) of 16S rRNA. The chain is Ribosomal RNA small subunit methyltransferase H from Histophilus somni (strain 129Pt) (Haemophilus somnus).